A 383-amino-acid chain; its full sequence is MSPEVALNRISPMLSPFISSVVRNGKVGLDATNCLRITDLKSGCTSLTPGPNCDRFKLHMPYAGETLKWDIIFNAQYPELPPDFIFGEDAEFLPDPSALQNLASWNPSNPECLLLVVKELVQQYHQFQCSRLRESSRLMFEYQTLLEEPQYGENMEIYAGKKNNWTGEFSARFLLKLPVDFSNIPTYLLKDVNEDPGEDVALLSVSFEDTEATQVYPKLYLSPRIEHALGGSSALHIPAFPGGGCLIDYVPQVCHLLTNKVQYVIQGYHKRREYIAAFLSHFGTGVVEYDAEGFTKLTLLLMWKDFCFLVHIDLPLFFPRDQPTLTFQSVYHFTNSGQLYSQAQKNYPYSPRWDGNEMAKRAKAYFKTFVPQFQEAAFANGKL.

Met-1 is modified (N-acetylmethionine). Ser-2 carries the phosphoserine modification. UEV-like regions lie at residues 30-147 (DATN…TLLE) and 275-364 (IAAF…RAKA).

The protein belongs to the BABAM2 family. In terms of assembly, component of the ARISC complex, at least composed of UIMC1/RAP80, ABRAXAS1, BRCC3/BRCC36, BABAM2 and BABAM1/NBA1. Component of the BRCA1-A complex, at least composed of BRCA1, BARD1, UIMC1/RAP80, ABRAXAS1, BRCC3/BRCC36, BABAM2 and BABAM1/NBA1. In the BRCA1-A complex, interacts directly with ABRAXAS1, BRCC3/BRCC36 and BABAM1/NBA1. Binds polyubiquitin. Component of the BRISC complex, at least composed of ABRAXAS2, BRCC3/BRCC36, BABAM2 and BABAM1/NBA1. Identified in a complex with SHMT2 and the other subunits of the BRISC complex. Component of the BRCA1/BRCA2 containing complex (BRCC), which also contains BRCA1, BRCA2, BARD1, BRCC3/BRCC36 and RAD51. BRCC is a ubiquitin E3 ligase complex that enhances cellular survival following DNA damage. May interact with FAS and TNFRSF1A.

It is found in the cytoplasm. Its subcellular location is the nucleus. Its function is as follows. Component of the BRCA1-A complex, a complex that specifically recognizes 'Lys-63'-linked ubiquitinated histones H2A and H2AX at DNA lesions sites, leading to target the BRCA1-BARD1 heterodimer to sites of DNA damage at double-strand breaks (DSBs). The BRCA1-A complex also possesses deubiquitinase activity that specifically removes 'Lys-63'-linked ubiquitin on histones H2A and H2AX. In the BRCA1-A complex, it acts as an adapter that bridges the interaction between BABAM1/NBA1 and the rest of the complex, thereby being required for the complex integrity and modulating the E3 ubiquitin ligase activity of the BRCA1-BARD1 heterodimer. Component of the BRISC complex, a multiprotein complex that specifically cleaves 'Lys-63'-linked ubiquitin in various substrates. Within the BRISC complex, acts as an adapter that bridges the interaction between BABAM1/NBA1 and the rest of the complex, thereby being required for the complex integrity. The BRISC complex is required for normal mitotic spindle assembly and microtubule attachment to kinetochores via its role in deubiquitinating NUMA1. The BRISC complex plays a role in interferon signaling via its role in the deubiquitination of the interferon receptor IFNAR1; deubiquitination increases IFNAR1 activity by enhancing its stability and cell surface expression. Down-regulates the response to bacterial lipopolysaccharide (LPS) via its role in IFNAR1 deubiquitination. May play a role in homeostasis or cellular differentiation in cells of neural, epithelial and germline origins. May also act as a death receptor-associated anti-apoptotic protein, which inhibits the mitochondrial apoptotic pathway. May regulate TNF-alpha signaling through its interactions with TNFRSF1A; however these effects may be indirect. The chain is BRISC and BRCA1-A complex member 2 (BABAM2) from Pongo abelii (Sumatran orangutan).